The chain runs to 108 residues: CRISPR-associated endoribonuclease Cas2 (108 aa).

D15 is a Mg(2+) binding site.

The protein belongs to the CRISPR-associated endoribonuclease Cas2 protein family. As to quaternary structure, homodimer, forms a heterotetramer with a Cas1 homodimer. It depends on Mg(2+) as a cofactor.

CRISPR (clustered regularly interspaced short palindromic repeat), is an adaptive immune system that provides protection against mobile genetic elements (viruses, transposable elements and conjugative plasmids). CRISPR clusters contain sequences complementary to antecedent mobile elements and target invading nucleic acids. CRISPR clusters are transcribed and processed into CRISPR RNA (crRNA). Functions as a ssRNA-specific endoribonuclease. Involved in the integration of spacer DNA into the CRISPR cassette. The sequence is that of CRISPR-associated endoribonuclease Cas2 from Paracidovorax avenae (strain ATCC 19860 / DSM 7227 / CCUG 15838 / JCM 20985 / LMG 2117 / NCPPB 1011) (Acidovorax avenae).